A 230-amino-acid chain; its full sequence is Iron-dependent repressor IdeR (230 aa).

The 62-residue stretch at 4-65 (LVDTTEMYLR…VAGNRHLELT (62 aa)) folds into the HTH dtxR-type domain.

Belongs to the DtxR/MntR family. As to quaternary structure, homodimer.

It localises to the cytoplasm. In terms of biological role, metal-dependent DNA-binding protein that controls transcription of many genes involved in iron metabolism. This chain is Iron-dependent repressor IdeR (ideR), found in Mycobacterium leprae (strain TN).